The sequence spans 367 residues: MSIGVVHEQTITFEAGIRLESGRILAPITLVYELYGTMNADCSNVIMVEHAWTGDAHLAGKRREDDPKPGWWDAIVGPGRLLDTDRYCVLCSNVIGSCYGSTGPASINPRTGKRYNLSFPVITVRDMVRAQELLLDHLGIRRLLCVMGGSMGGMQALEWATQYPERVASVVALATTPRPSPQAISLNAVARWAIYNDPTWKKGEYKHNPKDGLALARGIGHITFLSDESMWQKFERRFSAKDGLFDFFGQFEVERYLNYNGYNFVDRFDANCFLYLAKALDLYDVAWGYESMTDAFSRITAPIQFFAFSSDWLYPPYQTEEMVTCLQGLGKEVEYHLIQSAYGHDAFLLEHETFTPMVRSLLERVAP.

One can recognise an AB hydrolase-1 domain in the interval 44 to 350; it reads NVIMVEHAWT…AYGHDAFLLE (307 aa). Ser150 functions as the Nucleophile in the catalytic mechanism. Arg217 serves as a coordination point for substrate. Catalysis depends on residues Asp311 and His344. A substrate-binding site is contributed by Asp345.

It belongs to the AB hydrolase superfamily. MetX family. Homodimer.

Its subcellular location is the cytoplasm. It carries out the reaction L-homoserine + acetyl-CoA = O-acetyl-L-homoserine + CoA. The protein operates within amino-acid biosynthesis; L-methionine biosynthesis via de novo pathway; O-acetyl-L-homoserine from L-homoserine: step 1/1. In terms of biological role, transfers an acetyl group from acetyl-CoA to L-homoserine, forming acetyl-L-homoserine. In vitro, can also use propionyl-CoA or butiryl-CoA as acyl donor. The protein is Homoserine O-acetyltransferase of Trichlorobacter lovleyi (strain ATCC BAA-1151 / DSM 17278 / SZ) (Geobacter lovleyi).